Reading from the N-terminus, the 335-residue chain is Epidermal differentiation-specific protein (335 aa).

Beta/gamma crystallin 'Greek key' domains are found at residues 2–42 (NTIT…KIVG), 43–81 (QPWI…RLIT), 87–126 (PQIT…RVQR), and 127–169 (GAWA…YPLR).

It belongs to the beta/gamma-crystallin family. In terms of tissue distribution, epidermis specific.

This is Epidermal differentiation-specific protein from Cynops pyrrhogaster (Japanese fire-bellied newt).